A 167-amino-acid chain; its full sequence is NAD(P)H-quinone oxidoreductase subunit I, chloroplastic (167 aa).

2 consecutive 4Fe-4S ferredoxin-type domains span residues 55-84 and 95-124; these read GRIHFEFDKCIACEVCVRVCPIDLPVVDWK and LNYSIDFGICIFCGNCVEYCPTNCLSMTEE. Positions 64, 67, 70, 74, 104, 107, 110, and 114 each coordinate [4Fe-4S] cluster.

This sequence belongs to the complex I 23 kDa subunit family. In terms of assembly, NDH is composed of at least 16 different subunits, 5 of which are encoded in the nucleus. It depends on [4Fe-4S] cluster as a cofactor.

It is found in the plastid. The protein resides in the chloroplast thylakoid membrane. The enzyme catalyses a plastoquinone + NADH + (n+1) H(+)(in) = a plastoquinol + NAD(+) + n H(+)(out). The catalysed reaction is a plastoquinone + NADPH + (n+1) H(+)(in) = a plastoquinol + NADP(+) + n H(+)(out). Its function is as follows. NDH shuttles electrons from NAD(P)H:plastoquinone, via FMN and iron-sulfur (Fe-S) centers, to quinones in the photosynthetic chain and possibly in a chloroplast respiratory chain. The immediate electron acceptor for the enzyme in this species is believed to be plastoquinone. Couples the redox reaction to proton translocation, and thus conserves the redox energy in a proton gradient. The protein is NAD(P)H-quinone oxidoreductase subunit I, chloroplastic of Lobularia maritima (Sweet alyssum).